Reading from the N-terminus, the 203-residue chain is Peroxiredoxin (203 aa).

Residues Val3–Phe156 enclose the Thioredoxin domain. Cys44 serves as the catalytic Cysteine sulfenic acid (-SOH) intermediate. Residue Arg119 participates in substrate binding.

This sequence belongs to the peroxiredoxin family. Prx6 subfamily. Homodecamer. Pentamer of dimers that assemble into a ring structure.

The protein resides in the cytoplasm. The enzyme catalyses a hydroperoxide + [thioredoxin]-dithiol = an alcohol + [thioredoxin]-disulfide + H2O. Thiol-specific peroxidase that catalyzes the reduction of hydrogen peroxide and organic hydroperoxides to water and alcohols, respectively. Plays a role in cell protection against oxidative stress by detoxifying peroxides. This Thermoplasma volcanium (strain ATCC 51530 / DSM 4299 / JCM 9571 / NBRC 15438 / GSS1) protein is Peroxiredoxin.